Reading from the N-terminus, the 664-residue chain is Protein cueball (664 aa).

An N-terminal signal peptide occupies residues 1–21 (MRNLGIAVTFAVLLVIGYVTA). The Extracellular portion of the chain corresponds to 22–552 (LEWDAVVTTD…VTYCKNSFNR (531 aa)). N-linked (GlcNAc...) asparagine glycosylation is found at N40, N140, and N188. LDL-receptor class B repeat units follow at residues 115–157 (RKLY…ENHD), 168–211 (RHLY…DHYN), and 212–257 (NRIY…NSQY). EGF-like domains follow at residues 367–399 (EIPI…FEGE), 402–438 (DRNI…ARCE), and 473–510 (EEYT…KRCE). 8 disulfides stabilise this stretch: C371/C380, C375/C390, C406/C416, C410/C426, C428/C437, C477/C487, C481/C498, and C500/C509. N431 carries N-linked (GlcNAc...) asparagine glycosylation. N-linked (GlcNAc...) asparagine glycosylation occurs at N491. N551 carries an N-linked (GlcNAc...) asparagine glycan. Residues 553 to 573 (TVVYVSLAFTASLVTLVTILC) traverse the membrane as a helical segment. Over 574–664 (TVRRMYERNR…KLPSCVAEKN (91 aa)) the chain is Cytoplasmic.

Belongs to the cueball family.

The protein localises to the cell membrane. Has a role in spermatogenesis and oogenesis. The protein is Protein cueball of Aedes aegypti (Yellowfever mosquito).